The primary structure comprises 290 residues: Prepilin leader peptidase/N-methyltransferase (290 aa).

Residues 14–34 (LYFSLVFLFSLMIGSFLNVVI) form a helical membrane-spanning segment. Positions 74, 77, 99, and 102 each coordinate Zn(2+). The next 6 membrane-spanning stretches (helical) occupy residues 106–126 (ISARYPLVELLTALLSVAVAM), 130–150 (PGWGTLAALLLTWVLVALTFI), 161–181 (LTLPLLWGGLLFNLLGGFVSL), 185–205 (VIGAMAGYLVLWSLYWAFKLL), 232–252 (PIVLLLSSLVGAFMGIGLILL), and 261–281 (IPFGPYLAIAGWIALLWGDSI).

Belongs to the peptidase A24 family. Zn(2+) serves as cofactor.

The protein localises to the cell inner membrane. The catalysed reaction is Typically cleaves a -Gly-|-Phe- bond to release an N-terminal, basic peptide of 5-8 residues from type IV prepilin, and then N-methylates the new N-terminal amino group, the methyl donor being S-adenosyl-L-methionine.. Its function is as follows. Plays an essential role in type IV pili and type II pseudopili formation by proteolytically removing the leader sequence from substrate proteins and subsequently monomethylating the alpha-amino group of the newly exposed N-terminal phenylalanine. The sequence is that of Prepilin leader peptidase/N-methyltransferase (tapD) from Aeromonas hydrophila.